Here is a 543-residue protein sequence, read N- to C-terminus: Peptide chain release factor 3 (543 aa).

The tr-type G domain occupies 21–289 (KKRRTFAIIS…ALSDWAPSPL (269 aa)). GTP contacts are provided by residues 30-37 (SHPDAGKT), 98-102 (DTPGH), and 152-155 (NKLD).

Belongs to the TRAFAC class translation factor GTPase superfamily. Classic translation factor GTPase family. PrfC subfamily.

It is found in the cytoplasm. In terms of biological role, increases the formation of ribosomal termination complexes and stimulates activities of RF-1 and RF-2. It binds guanine nucleotides and has strong preference for UGA stop codons. It may interact directly with the ribosome. The stimulation of RF-1 and RF-2 is significantly reduced by GTP and GDP, but not by GMP. This Thiobacillus denitrificans (strain ATCC 25259 / T1) protein is Peptide chain release factor 3.